The sequence spans 2671 residues: Inositol 1,4,5-trisphosphate-gated calcium channel ITPR3 (2671 aa).

The Cytoplasmic segment spans residues 1–2202 (MSEMSSFLHI…LIYWFSRRMT (2202 aa)). MIR domains are found at residues 113–173 (GDVV…LRSN), 174–224 (GDNV…INLF), 232–288 (EEVL…VEVV), 295–372 (GGAG…LDPT), and 378–434 (DSFV…IVSV). 1D-myo-inositol 1,4,5-trisphosphate is bound by residues R266, T268, L269, and R270. Residues 322 to 342 (SYKGDASDPKAAGMGAQGRTG) are disordered. 1D-myo-inositol 1,4,5-trisphosphate-binding residues include R503, K507, R510, Y567, R568, and K569. Residue R743 coordinates Ca(2+). Phosphoserine is present on residues S916 and S934. 2 residues coordinate Ca(2+): E1122 and E1125. 2 disordered regions span residues 1132–1163 (GSGKGEEVEAGAAKDKKERPTDEEGFLHPPGE) and 1809–1848 (NDLGSQPHEDREPVDPTTKGRVASFSIPGSSSRYSLGPSL). Phosphoserine is present on residues S1813, S1832, and S1834. Ca(2+) contacts are provided by E1882 and E1946. Residues A1996, E2149, and K2152 each contribute to the ATP site. A helical transmembrane segment spans residues 2203–2223 (LWGSISFNLAVFINIIIAFFY). Residues 2224-2235 (PYMEGASTGVLD) lie on the Extracellular side of the membrane. A helical transmembrane segment spans residues 2236–2256 (SPLISLLFWILICFSIAALFT). Over 2257–2264 (KRYSIRPL) the chain is Cytoplasmic. A helical transmembrane segment spans residues 2265 to 2285 (IVALILRSIYYLGIGPTLNIL). The Extracellular segment spans residues 2286–2325 (GALNLTNKIVFVVSFVGNRGTFIRGYKAMVMDMEFLYHVG). The chain crosses the membrane as a helical span at residues 2326-2346 (YILTSVLGLFAHELFYSILLF). Over 2347-2368 (DLIYREETLFNVIKSVTRNGRS) the chain is Cytoplasmic. A helical transmembrane segment spans residues 2369–2389 (ILLTALLALILVYLFSIVGFL). The Extracellular segment spans residues 2390–2496 (FLKDDFILEV…ESLFPARVVY (107 aa)). The cysteines at positions 2455 and 2461 are disulfide-linked. Residues 2497–2517 (DLLFFFIVIIIVLNLIFGVII) traverse the membrane as a helical segment. Residues 2518-2671 (DTFADLRSEK…FVDVQNCISR (154 aa)) are Cytoplasmic-facing. C2538 and F2539 together coordinate ATP. C2538 contributes to the Zn(2+) binding site. Zn(2+)-binding residues include C2541 and H2558. ATP is bound by residues K2560, H2563, N2564, and M2565. Residue H2563 participates in Zn(2+) binding. T2581 is a Ca(2+) binding site. S2609 and S2670 each carry phosphoserine.

It belongs to the InsP3 receptor family. As to quaternary structure, homotetramer. Homodimer. Interacts with TRPC1, TRPC3 and TRPC4. Interacts with TRPV4. Interacts with SIGMAR1. Interacts with PML and AKT1. Interacts with IRAG2 (via coiled-coil domain). Interacts with CABP1. Interacts with TMBIM4/LFG4. Interacts with CEMIP. Interacts with TESPA1. Interacts with TMEM203. Interacts with BOK; regulates ITPR3 expression. Interacts with BCL2L10. Interacts with CHGA and CHGB. Post-translationally, phosphorylated by AKT1 on serine and/or threonine residues. In terms of tissue distribution, expressed in intestinal crypt and villus epithelial cells.

The protein resides in the endoplasmic reticulum membrane. Its subcellular location is the cytoplasmic vesicle. It is found in the secretory vesicle membrane. The enzyme catalyses Ca(2+)(in) = Ca(2+)(out). Inositol 1,4,5-trisphosphate-gated calcium channel is regulated by cytosolic calcium in a biphasic manner. At low concentrations, cytosolic calcium binds at a high-affinity juxtamembrane domain (JD) calcium binding site, allowing ITPR3 to activate by escaping a low-energy resting state through an ensemble of preactivated states. At high cytosolic calcium concentrations, ITPR3 preferentially enters an inhibited state stabilized by calcium binding at a second, low-affinity cytoplasmic domain (CD) calcium binding site. Inositol 1,4,5-trisphosphate-gated calcium channel that, upon 1D-myo-inositol 1,4,5-trisphosphate binding, transports calcium from the endoplasmic reticulum lumen to cytoplasm, thus releasing the intracellular calcium and therefore participates in cellular calcium ion homeostasis. 1D-myo-inositol 1,4,5-trisphosphate binds to the ligand-free channel without altering its global conformation, yielding the low-energy resting state, then progresses through resting-to preactivated transitions to the higher energy preactivated state, which increases affinity for calcium, promoting binding of the low basal cytosolic calcium at the juxtamembrane domain (JD) site, favoring the transition through the ensemble of high-energy intermediate states along the trajectory to the fully-open activated state. Upon opening, releases calcium in the cytosol where it can bind to the low-affinity cytoplasmic domain (CD) site and stabilizes the inhibited state to terminate calcium release. This is Inositol 1,4,5-trisphosphate-gated calcium channel ITPR3 from Homo sapiens (Human).